We begin with the raw amino-acid sequence, 520 residues long: GMP synthase [glutamine-hydrolyzing] (520 aa).

One can recognise a Glutamine amidotransferase type-1 domain in the interval 9 to 202; that stretch reads TILIIDFGSQ…VHRIVGVKPG (194 aa). Cys-86 (nucleophile) is an active-site residue. Residues His-176 and Glu-178 contribute to the active site. In terms of domain architecture, GMPS ATP-PPase spans 203 to 395; the sequence is WTMGAYREQA…LGLPDSFIGR (193 aa). 230–236 contributes to the ATP binding site; sequence SGGVDSS.

As to quaternary structure, homodimer.

The catalysed reaction is XMP + L-glutamine + ATP + H2O = GMP + L-glutamate + AMP + diphosphate + 2 H(+). Its pathway is purine metabolism; GMP biosynthesis; GMP from XMP (L-Gln route): step 1/1. Catalyzes the synthesis of GMP from XMP. The sequence is that of GMP synthase [glutamine-hydrolyzing] from Brucella abortus (strain S19).